A 700-amino-acid polypeptide reads, in one-letter code: Methionine--tRNA ligase (700 aa).

Residues 14–24 (PYANGPVHLGH) carry the 'HIGH' region motif. The Zn(2+) site is built by Cys-146, Cys-149, Cys-159, and Cys-162. The short motif at 344-348 (KFSKS) is the 'KMSKS' region element. Position 347 (Lys-347) interacts with ATP. In terms of domain architecture, tRNA-binding spans 599–700 (DFLKVDLRVA…GEEINGRQIQ (102 aa)).

The protein belongs to the class-I aminoacyl-tRNA synthetase family. MetG type 1 subfamily. In terms of assembly, homodimer. Requires Zn(2+) as cofactor.

Its subcellular location is the cytoplasm. The enzyme catalyses tRNA(Met) + L-methionine + ATP = L-methionyl-tRNA(Met) + AMP + diphosphate. In terms of biological role, is required not only for elongation of protein synthesis but also for the initiation of all mRNA translation through initiator tRNA(fMet) aminoacylation. This is Methionine--tRNA ligase from Pelodictyon phaeoclathratiforme (strain DSM 5477 / BU-1).